Here is a 253-residue protein sequence, read N- to C-terminus: Triosephosphate isomerase (253 aa).

9-11 (NWK) contributes to the substrate binding site. Catalysis depends on H95, which acts as the Electrophile. The Proton acceptor role is filled by E167. Substrate is bound by residues G173, S213, and 234–235 (GG). Residue S213 is modified to Phosphoserine.

Belongs to the triosephosphate isomerase family. Homodimer.

Its subcellular location is the cytoplasm. The catalysed reaction is D-glyceraldehyde 3-phosphate = dihydroxyacetone phosphate. It functions in the pathway carbohydrate biosynthesis; gluconeogenesis. The protein operates within carbohydrate degradation; glycolysis; D-glyceraldehyde 3-phosphate from glycerone phosphate: step 1/1. Its function is as follows. Involved in the gluconeogenesis. Catalyzes stereospecifically the conversion of dihydroxyacetone phosphate (DHAP) to D-glyceraldehyde-3-phosphate (G3P). The polypeptide is Triosephosphate isomerase (Bacillus subtilis (strain 168)).